Consider the following 619-residue polypeptide: Long-chain fatty acid transport protein 6 (619 aa).

2 helical membrane-spanning segments follow: residues 22-42 (LLFP…RYGI) and 119-139 (VHVW…NSNL). AMP is bound at residue 221–232 (YIFTSGTTGLPK).

It belongs to the ATP-dependent AMP-binding enzyme family.

It is found in the cell membrane. Its subcellular location is the sarcolemma. The enzyme catalyses a fatty acid(in) = a fatty acid(out). It carries out the reaction hexadecanoate(out) = hexadecanoate(in). The catalysed reaction is (9Z,12Z)-octadecadienoate(out) = (9Z,12Z)-octadecadienoate(in). It catalyses the reaction (9Z)-octadecenoate(out) = (9Z)-octadecenoate(in). The enzyme catalyses a very long-chain fatty acid + ATP + CoA = a very long-chain fatty acyl-CoA + AMP + diphosphate. It carries out the reaction tetracosanoate + ATP + CoA = tetracosanoyl-CoA + AMP + diphosphate. The catalysed reaction is a long-chain fatty acid + ATP + CoA = a long-chain fatty acyl-CoA + AMP + diphosphate. It catalyses the reaction (9Z)-octadecenoate + ATP + CoA = (9Z)-octadecenoyl-CoA + AMP + diphosphate. The enzyme catalyses (5Z,8Z,11Z,14Z)-eicosatetraenoate + ATP + CoA = (5Z,8Z,11Z,14Z)-eicosatetraenoyl-CoA + AMP + diphosphate. Mediates the import of long-chain fatty acids (LCFA) into the cell by facilitating their transport at the plasma membrane. Also functions as an acyl-CoA ligase catalyzing the ATP-dependent formation of fatty acyl-CoA using LCFA and very-long-chain fatty acids (VLCFA) as substrates. Plays a pivotal role in regulating available LCFA substrates from exogenous sources in tissues undergoing high levels of beta-oxidation such as the heart. The protein is Long-chain fatty acid transport protein 6 (Slc27a6) of Mus musculus (Mouse).